A 546-amino-acid chain; its full sequence is Chaperonin GroEL (546 aa).

Residues 30–33 (TLGP), Lys-51, 87–91 (DGTTT), Gly-415, 479–481 (NAA), and Asp-495 contribute to the ATP site.

It belongs to the chaperonin (HSP60) family. As to quaternary structure, forms a cylinder of 14 subunits composed of two heptameric rings stacked back-to-back. Interacts with the co-chaperonin GroES.

The protein resides in the cytoplasm. The catalysed reaction is ATP + H2O + a folded polypeptide = ADP + phosphate + an unfolded polypeptide.. Together with its co-chaperonin GroES, plays an essential role in assisting protein folding. The GroEL-GroES system forms a nano-cage that allows encapsulation of the non-native substrate proteins and provides a physical environment optimized to promote and accelerate protein folding. The polypeptide is Chaperonin GroEL (Pseudomonas putida (strain ATCC 47054 / DSM 6125 / CFBP 8728 / NCIMB 11950 / KT2440)).